The following is a 72-amino-acid chain: Small ribosomal subunit protein bS20 (72 aa).

Belongs to the bacterial ribosomal protein bS20 family.

In terms of biological role, binds directly to 16S ribosomal RNA. In Proteus mirabilis, this protein is Small ribosomal subunit protein bS20 (rpsT).